We begin with the raw amino-acid sequence, 330 residues long: (11Z)-hexadec-11-enoyl-CoA conjugase (330 aa).

2 consecutive transmembrane segments (helical) span residues 37 to 57 and 65 to 85; these read IVVMNVIRFSYLHIAGLYGLY and LATSVFAIVLFFLGNFGITAG. The Histidine box-1 signature appears at 87 to 92; sequence HRLWSH. Residues 101–121 form a helical membrane-spanning segment; the sequence is LEILLMVFNSIAFQNTIFTWV. A Histidine box-2 motif is present at residues 124–128; it reads HRLHH. The next 2 membrane-spanning stretches (helical) occupy residues 185 to 205 and 216 to 238; these read AIPFIGTICFIIPTLAPMYFW and TVLRYIFSLNGTFLVNSAAHLWG. Residues 264–268 carry the Histidine box-3 motif; it reads HNYHH.

This sequence belongs to the fatty acid desaturase type 1 family. Fe(2+) is required as a cofactor. As to expression, highly expressed in the pheromone gland.

Its subcellular location is the membrane. It catalyses the reaction an 11,12-saturated fatty acyl-CoA + 2 Fe(II)-[cytochrome b5] + O2 + 2 H(+) = an (11Z)-Delta(11)-fatty acyl-CoA + 2 Fe(III)-[cytochrome b5] + 2 H2O. The catalysed reaction is (11Z)-hexadecenoyl-CoA + AH2 + O2 = (10E,12Z)-hexadecadienoyl-CoA + A + 2 H2O. Functionally, fatty acid desaturase that catalyzes 2 consecutive steps in the biosynthesis of bombykol, a sex pheromone produced by the moth. First acts as an acyl-CoA Delta(11) desaturase (1) by catalyzing the formation of Delta(11) fatty acyl precursors. Then acts as a (11Z)-hexadec-11-enoyl-CoA conjugase (2) by converting a single cis double bond at position 11 of (11Z)-hexadec-11-enoyl-CoA into conjugated 10 trans and 12 cis double bonds. This Bombyx mori (Silk moth) protein is (11Z)-hexadec-11-enoyl-CoA conjugase.